The following is a 386-amino-acid chain: Signal transduction histidine-protein kinase/phosphatase DegS (386 aa).

Positions 188–384 (KLSREIHDGP…TIIISIPITT (197 aa)) constitute a Histidine kinase domain. Phosphohistidine; by autocatalysis is present on histidine 194.

Post-translationally, autophosphorylated.

The protein localises to the cytoplasm. It carries out the reaction ATP + protein L-histidine = ADP + protein N-phospho-L-histidine.. Member of the two-component regulatory system DegS/DegU, which plays an important role in the transition growth phase. Acts as both a protein kinase that undergoes autophosphorylation and subsequently transfers the phosphate to DegU, and a protein phosphatase that dephosphorylates phospho-DegU. The sequence is that of Signal transduction histidine-protein kinase/phosphatase DegS (degS) from Brevibacillus brevis (Bacillus brevis).